The primary structure comprises 119 residues: Hydrogenase maturation factor HypA (119 aa).

His-2 lines the Ni(2+) pocket. The Zn(2+) site is built by Cys-73, Cys-76, Cys-89, and Cys-92.

This sequence belongs to the HypA/HybF family.

Its function is as follows. Involved in the maturation of [NiFe] hydrogenases. Required for nickel insertion into the metal center of the hydrogenase. This Dehalococcoides mccartyi (strain ATCC BAA-2266 / KCTC 15142 / 195) (Dehalococcoides ethenogenes (strain 195)) protein is Hydrogenase maturation factor HypA.